Reading from the N-terminus, the 103-residue chain is Large ribosomal subunit protein uL24 (103 aa).

The protein belongs to the universal ribosomal protein uL24 family. In terms of assembly, part of the 50S ribosomal subunit.

In terms of biological role, one of two assembly initiator proteins, it binds directly to the 5'-end of the 23S rRNA, where it nucleates assembly of the 50S subunit. One of the proteins that surrounds the polypeptide exit tunnel on the outside of the subunit. This chain is Large ribosomal subunit protein uL24 (rplX), found in Bacillus spizizenii (strain ATCC 23059 / NRRL B-14472 / W23) (Bacillus subtilis subsp. spizizenii).